Consider the following 212-residue polypeptide: ER lumen protein-retaining receptor 2 (212 aa).

Topologically, residues 1-4 are lumenal; it reads MNVF. Residues 5-24 form a helical membrane-spanning segment; that stretch reads RLSGDLSHLAAIIILLLKIW. At 25–32 the chain is on the cytoplasmic side; the sequence is KSRSCAGI. A helical transmembrane segment spans residues 33 to 52; the sequence is SGKSQLLFALVFTTRYLDLL. Residues 47-48 form an interaction with the K-D-E-L motif on target proteins region; the sequence is RY. Over 53 to 58 the chain is Lumenal; the sequence is TSFISL. Residues 59–79 traverse the membrane as a helical segment; the sequence is YNTSMKVIYIGCAYATVYLIY. The Cytoplasmic segment spans residues 80–92; it reads MKFKATYDGNHDT. Residues 93–110 traverse the membrane as a helical segment; the sequence is FRVEFLVVPVGGLSVLVN. Over 111–116 the chain is Lumenal; that stretch reads HDFSPL. A helical membrane pass occupies residues 117 to 135; it reads EILWTFSIYLESVAILPQL. Residues 136-149 are Cytoplasmic-facing; it reads FMISKTGEAETITT. A helical transmembrane segment spans residues 150 to 168; sequence HYLFFLGLYRALYLFNWIW. The interaction with the K-D-E-L motif on target proteins stretch occupies residues 159-169; it reads RALYLFNWIWR. Over 169–178 the chain is Lumenal; sequence RYSFEGFFDL. Residues 179 to 199 form a helical membrane-spanning segment; that stretch reads IAIVAGVVQTILYCDFFYLYV. Over 200–212 the chain is Cytoplasmic; it reads TKVLKGKKLSLPA. The important for recycling of cargo proteins with the sequence motif K-D-E-L from the Golgi to the endoplasmic reticulum stretch occupies residues 204 to 207; the sequence is KGKK.

This sequence belongs to the ERD2 family.

It is found in the endoplasmic reticulum membrane. The protein resides in the golgi apparatus membrane. Its subcellular location is the cytoplasmic vesicle. It localises to the COPI-coated vesicle membrane. Its function is as follows. Receptor for the C-terminal sequence motif K-D-E-L that is present on endoplasmic reticulum resident proteins and that mediates their recycling from the Golgi back to the endoplasmic reticulum. Binding is pH dependent, and is optimal at pH 5-5.4. This chain is ER lumen protein-retaining receptor 2 (kdelr2), found in Xenopus tropicalis (Western clawed frog).